Consider the following 286-residue polypeptide: Putative L-ribulose-5-phosphate 3-epimerase SgbU (286 aa).

The protein belongs to the L-ribulose-5-phosphate 3-epimerase family.

It catalyses the reaction L-ribulose 5-phosphate = L-xylulose 5-phosphate. Functionally, catalyzes the isomerization of L-xylulose-5-phosphate to L-ribulose-5-phosphate. This chain is Putative L-ribulose-5-phosphate 3-epimerase SgbU (sgbU), found in Haemophilus influenzae (strain ATCC 51907 / DSM 11121 / KW20 / Rd).